The following is a 653-amino-acid chain: Elongation factor 4 (653 aa).

The tract at residues 1–30 (MRTPCSQHRRDRPSAIGSQLPDADTLDTRQ) is disordered. One can recognise a tr-type G domain in the interval 50-231 (AQIRNFCIIA…EVVRQVPPPQ (182 aa)). GTP is bound by residues 62-67 (DHGKST) and 178-181 (NKID).

Belongs to the TRAFAC class translation factor GTPase superfamily. Classic translation factor GTPase family. LepA subfamily.

The protein resides in the cell membrane. It catalyses the reaction GTP + H2O = GDP + phosphate + H(+). Its function is as follows. Required for accurate and efficient protein synthesis under certain stress conditions. May act as a fidelity factor of the translation reaction, by catalyzing a one-codon backward translocation of tRNAs on improperly translocated ribosomes. Back-translocation proceeds from a post-translocation (POST) complex to a pre-translocation (PRE) complex, thus giving elongation factor G a second chance to translocate the tRNAs correctly. Binds to ribosomes in a GTP-dependent manner. The sequence is that of Elongation factor 4 from Mycobacterium bovis (strain ATCC BAA-935 / AF2122/97).